We begin with the raw amino-acid sequence, 107 residues long: ATP-dependent Clp protease adapter protein ClpS (107 aa).

Positions 1–12 (MSGDKDFDKDSD) are enriched in basic and acidic residues. The segment at 1–21 (MSGDKDFDKDSDVTVITRTTP) is disordered.

It belongs to the ClpS family. Binds to the N-terminal domain of the chaperone ClpA.

Functionally, involved in the modulation of the specificity of the ClpAP-mediated ATP-dependent protein degradation. This Zymomonas mobilis subsp. mobilis (strain ATCC 31821 / ZM4 / CP4) protein is ATP-dependent Clp protease adapter protein ClpS.